A 400-amino-acid chain; its full sequence is Inosine-5'-monophosphate dehydrogenase (400 aa).

A compositionally biased stretch (basic and acidic residues) spans 96–116 (KNESTPDQNLDKESTDGKDTK). The interval 96 to 125 (KNESTPDQNLDKESTDGKDTKSNNNIDAYS) is disordered. Residues aspartate 163 and 212 to 214 (GIG) each bind NAD(+). Positions 214 and 216 each coordinate K(+). IMP is bound at residue serine 217. Cysteine 219 contributes to the K(+) binding site. The active-site Thioimidate intermediate is the cysteine 219. IMP contacts are provided by residues 252-254 (DGG), 275-276 (GS), and 299-303 (YRGMG). The Proton acceptor role is filled by arginine 315. Glutamate 329 serves as a coordination point for IMP. Residues glutamate 383, serine 384, and histidine 385 each coordinate K(+).

Belongs to the IMPDH/GMPR family. In terms of assembly, homotetramer. Requires K(+) as cofactor.

The protein localises to the cytoplasm. It carries out the reaction IMP + NAD(+) + H2O = XMP + NADH + H(+). It functions in the pathway purine metabolism; XMP biosynthesis via de novo pathway; XMP from IMP: step 1/1. Its activity is regulated as follows. Mycophenolic acid (MPA) is a non-competitive inhibitor that prevents formation of the closed enzyme conformation by binding to the same site as the amobile flap. In contrast, mizoribine monophosphate (MZP) is a competitive inhibitor that induces the closed conformation. MPA is a potent inhibitor of mammalian IMPDHs but a poor inhibitor of the bacterial enzymes. MZP is a more potent inhibitor of bacterial IMPDH. Resistant to mycophenolic acid (MPA) inhibition. Catalyzes the conversion of inosine 5'-phosphate (IMP) to xanthosine 5'-phosphate (XMP), the first committed and rate-limiting step in the de novo synthesis of guanine nucleotides, and therefore plays an important role in the regulation of cell growth. This chain is Inosine-5'-monophosphate dehydrogenase, found in Cryptosporidium parvum.